The primary structure comprises 435 residues: Probable exopolygalacturonase X (435 aa).

The signal sequence occupies residues 1 to 22 (MRLTHVLSHTLGLLALGATAEA). A disordered region spans residues 31 to 55 (CSPKKPFRPLPTSSSRDKTCHVRSH). Residues 45-55 (SRDKTCHVRSH) are compositionally biased toward basic and acidic residues. 4 N-linked (GlcNAc...) asparagine glycosylation sites follow: N93, N112, N128, and N198. 2 PbH1 repeats span residues 199–229 (SSNVLFDGIDISGYSKSDNEAKNTDGWDTYR) and 230–251 (SNNIVIQNSVINNGDDCVSFKP). D244 functions as the Proton donor in the catalytic mechanism. Residues C246 and C263 are joined by a disulfide bond. 2 N-linked (GlcNAc...) asparagine glycosylation sites follow: N252 and N264. Residues 253–273 (STNILVQNLHCNGSHGISVGS) form a PbH1 3 repeat. The active site involves H267. N-linked (GlcNAc...) asparagine glycosylation is found at N291, N296, N328, and N353. A PbH1 4 repeat occupies 326–347 (VKNITYDTALIDNVDWAIEITQ). One copy of the PbH1 5 repeat lies at 361–409 (PSSLTISDVHIKNFRGTTSGSEDPYVGTIVCSSPDTCSDIYTSNINVTS). C391 and C397 are disulfide-bonded. Residues N406 and N429 are each glycosylated (N-linked (GlcNAc...) asparagine).

Belongs to the glycosyl hydrolase 28 family.

It is found in the secreted. The enzyme catalyses [(1-&gt;4)-alpha-D-galacturonosyl](n) + H2O = alpha-D-galacturonate + [(1-&gt;4)-alpha-D-galacturonosyl](n-1). Its function is as follows. Specific in hydrolyzing the terminal glycosidic bond of polygalacturonic acid and oligogalacturonates. The polypeptide is Probable exopolygalacturonase X (pgaX) (Aspergillus niger (strain ATCC MYA-4892 / CBS 513.88 / FGSC A1513)).